A 646-amino-acid chain; its full sequence is Calcium-dependent protein kinase 2 (646 aa).

A lipid anchor (N-myristoyl glycine) is attached at glycine 2. Cysteine 5 carries the S-palmitoyl cysteine lipid modification. The tract at residues 27–169 (RIGAEQASSS…HMRRVSSAGL (143 aa)) is disordered. Residues 32-43 (QASSSSHGNGQV) show a composition bias toward polar residues. Composition is skewed to basic and acidic residues over residues 73–119 (PETK…KREV) and 126–157 (AKPETKSESKPETTKPETTSETKPETKAEPQK). The 259-residue stretch at 186–444 (YSLGRKLGQG…AHQVLCHPWV (259 aa)) folds into the Protein kinase domain. ATP is bound by residues 192–200 (LGQGQFGTT) and lysine 215. Residue aspartate 310 is the Proton acceptor of the active site. Phosphoserine is present on serine 350. The tract at residues 450–480 (APDKPLDSAVLSRMKQFSAMNKFKKMALRVI) is autoinhibitory domain. EF-hand domains lie at 487-522 (EEIAGLKQMFKMIDADNSGQITFEELKAGLKRVGAN), 523-558 (LKESEILDLMQAADVDNSGTIDYKEFIAATLHLNKI), 559-592 (EREDHLFAAFSYFDKDESGFITPDELQQACEEFG), and 593-628 (VEDARIEEMMRDVDQDKDGRIDYNEFVAMMQKGSIM). Ca(2+) contacts are provided by aspartate 500, aspartate 502, serine 504, glutamine 506, glutamate 511, aspartate 536, aspartate 538, serine 540, threonine 542, glutamate 547, aspartate 572, aspartate 574, serine 576, glutamate 583, aspartate 606, aspartate 608, aspartate 610, arginine 612, and glutamate 617.

It belongs to the protein kinase superfamily. Ser/Thr protein kinase family. CDPK subfamily. Interacts with 14-3-3 proteins.

It localises to the endoplasmic reticulum membrane. It catalyses the reaction L-seryl-[protein] + ATP = O-phospho-L-seryl-[protein] + ADP + H(+). The catalysed reaction is L-threonyl-[protein] + ATP = O-phospho-L-threonyl-[protein] + ADP + H(+). With respect to regulation, activated by calcium. Autophosphorylation may play an important role in the regulation of the kinase activity. Its function is as follows. May play a role in signal transduction pathways that involve calcium as a second messenger. This Arabidopsis thaliana (Mouse-ear cress) protein is Calcium-dependent protein kinase 2 (CPK2).